The primary structure comprises 181 residues: Phospholipase A2 inhibitor gamma subunit B (181 aa).

Disulfide bonds link Cys3-Cys27, Cys6-Cys13, Cys20-Cys48, Cys54-Cys75, Cys76-Cys81, Cys101-Cys126, Cys119-Cys146, and Cys152-Cys172.

The protein belongs to the CNF-like-inhibitor family. As to quaternary structure, heterotrimer of 2 subunits A and 1 subunit B. As to expression, expressed by the liver.

It localises to the secreted. Strongly inhibits its own venom PLA2 and all other PLA2s tested including Elapid, Crotalid and Viperid venom PLA2s, as well as honeybee PLA2s. The sequence is that of Phospholipase A2 inhibitor gamma subunit B from Laticauda semifasciata (Black-banded sea krait).